The sequence spans 84 residues: Beta-cardiotoxin CTX21 (84 aa).

An N-terminal signal peptide occupies residues 1 to 21 (MKTLLLTLVVVTIVCLDLGYT). 4 cysteine pairs are disulfide-bonded: Cys24–Cys43, Cys36–Cys61, Cys65–Cys76, and Cys77–Cys82.

The protein belongs to the three-finger toxin family. Short-chain subfamily. Aminergic toxin sub-subfamily. As to expression, expressed by the venom gland.

It localises to the secreted. Acts as a beta-blocker by binding to beta-1 and beta-2 adrenergic receptors (ADRB1 and ADRB2). It dose-dependently decreases the heart rate (bradycardia), whereas conventional cardiotoxins increases it. At 100 mg/kg, intraperitoneal injection into mice provokes labored breathing, impaired locomotion, lack of response to external stimuli, and death (after 30 minutes). This chain is Beta-cardiotoxin CTX21, found in Ophiophagus hannah (King cobra).